Here is a 1012-residue protein sequence, read N- to C-terminus: Structural polyprotein (1012 aa).

D30 serves as a coordination point for a divalent metal cation. Positions 513 to 755 (ADKGYEVVAN…AGRQYHLAMA (243 aa)) constitute a Peptidase S50 domain. The active-site Nucleophile is the S652. K692 is a catalytic residue. The tract at residues 969-1012 (AMELKHRNPRRAPPKPKPKPNAPTQRPPGRLGRWIRTVSDEDLE) is disordered. Positions 975 to 986 (RNPRRAPPKPKP) are enriched in basic residues. Residues 1003-1012 (IRTVSDEDLE) form an interaction with VP1 protein region.

In terms of assembly, homotrimer. A central divalent metal stabilizes the VP2 trimer. Interacts with host ITGA4/ITGB1. As to quaternary structure, homodimer. Interacts (via C-terminus) with VP1 in the cytoplasm. Interacts with VP2. Specific enzymatic cleavages yield mature proteins. The capsid assembly seems to be regulated by polyprotein processing. The protease VP4 cleaves itself off the polyprotein, thus releasing pre-VP2 and VP3 within the infected cell. During capsid assembly, the C-terminus of pre-VP2 is further processed by VP4, giving rise to VP2, the external capsid protein and three small peptides that all stay closely associated with the capsid.

Its subcellular location is the virion. It localises to the host cytoplasm. Its function is as follows. Capsid protein VP2 self assembles to form an icosahedral capsid with a T=13 symmetry, about 70 nm in diameter, and consisting of 260 VP2 trimers. The capsid encapsulates the genomic dsRNA. VP2 is also involved in attachment and entry into the host cell by interacting with host ITGA4/ITGB1. The precursor of VP2 plays an important role in capsid assembly. First, pre-VP2 and VP2 oligomers assemble to form a procapsid. Then, the pre-VP2 intermediates may be processed into VP2 proteins by proteolytic cleavage mediated by VP4 to obtain the mature virion. The final capsid is composed of pentamers and hexamers but VP2 has a natural tendency to assemble into all-pentameric structures. Therefore pre-VP2 may be required to allow formation of the hexameric structures. In terms of biological role, protease VP4 is a serine protease that cleaves the polyprotein into its final products. Pre-VP2 is first partially cleaved, and may be completely processed by VP4 upon capsid maturation. Functionally, capsid protein VP3 plays a key role in virion assembly by providing a scaffold for the capsid made of VP2. May self-assemble to form a T=4-like icosahedral inner-capsid composed of at least 180 trimers. Plays a role in genomic RNA packaging by recruiting VP1 into the capsid and interacting with the dsRNA genome segments to form a ribonucleoprotein complex. Additionally, the interaction of the VP3 C-terminal tail with VP1 removes the inherent structural blockade of the polymerase active site. Thus, VP3 can also function as a transcriptional activator. Its function is as follows. Structural peptide 1 is a small peptide derived from pre-VP2 C-terminus. It destabilizes and perforates cell membranes, suggesting a role during entry. Structural peptide 2 is a small peptide derived from pVP2 C-terminus. It is not essential for the virus viability, but viral growth is affected when missing. In terms of biological role, structural peptide 3 is a small peptide derived from pVP2 C-terminus. It is not essential for the virus viability, but viral growth is affected when missing. Functionally, structural peptide 4 is a small peptide derived from pVP2 C-terminus. It is essential for the virus viability. The polypeptide is Structural polyprotein (Avian infectious bursal disease virus (strain STC) (IBDV)).